We begin with the raw amino-acid sequence, 400 residues long: Putative niacin/nicotinamide transporter NiaP (400 aa).

Residues 1-14 (MGKQQPISQRKLLG) are Cytoplasmic-facing. Residues 15 to 35 (VAGLGWLFDAMDVGILSFIIA) traverse the membrane as a helical segment. Residues 36–49 (ALHVEWNLSPEEMK) lie on the Extracellular side of the membrane. A helical membrane pass occupies residues 50–70 (WIGSVNSIGMAAGAFLFGLLA). Topologically, residues 71 to 77 (DRIGRKK) are cytoplasmic. A run of 2 helical transmembrane segments spans residues 78–98 (VFII…FVTS) and 99–119 (LSAF…ELPV). Over 120-142 (ASTLVSEAVVPEKRGRVIVLLES) the chain is Cytoplasmic. A helical membrane pass occupies residues 143-163 (FWAVGWLAAALISYFVIPSFG). At 164–165 (WQ) the chain is on the extracellular side. A helical transmembrane segment spans residues 166 to 186 (AALLLTALTAFYALYLRTSLP). The Cytoplasmic segment spans residues 187-217 (DSPKYESLSAKKRSMWENVKSVWARQYIRPT). The chain crosses the membrane as a helical span at residues 218–238 (VMLSIVWFCVVFSYYGMFLWL). The Extracellular segment spans residues 239–253 (PSVMLLKGFSMIQSF). The chain crosses the membrane as a helical span at residues 254–274 (EYVLLMTLAQLPGYFSAAWLI). Residues 275-280 (EKAGRK) are Cytoplasmic-facing. A helical membrane pass occupies residues 281–301 (WILVVYLIGTAGSAYFFGTAD). Residues 302-304 (SLS) are Extracellular-facing. Residues 305 to 325 (LLLTAGVLLSFFNLGAWGVLY) traverse the membrane as a helical segment. Topologically, residues 326–343 (AYTPEQYPTAIRATGSGT) are cytoplasmic. The helical transmembrane segment at 344-364 (TAAFGRIGGIFGPLLVGTLAA) threads the bilayer. Residues 365 to 370 (RHISFS) are Extracellular-facing. Residues 371-391 (VIFSIFCIAILLAVACILIMG) traverse the membrane as a helical segment. Residues 392–400 (KETKQTELE) are Cytoplasmic-facing.

The protein belongs to the major facilitator superfamily. Sugar transporter (TC 2.A.1.1) family.

Its subcellular location is the cell membrane. In terms of biological role, probably involved in the uptake of amidated and deamidated forms of niacin. Increases the growth rate of E.coli that is unable to make niacin de novo; confers increased sensitivity to the toxic niacin analog 6-amino-nicotinamide to wild-type E.coli. There is probably another mechanism for niacin uptake. This Bacillus subtilis (strain 168) protein is Putative niacin/nicotinamide transporter NiaP.